A 112-amino-acid chain; its full sequence is uncharacterized protein (112 aa).

Residues 62–82 (THSFIFFILFLFIFIFLTFSH) form a helical membrane-spanning segment.

Its subcellular location is the membrane. This is an uncharacterized protein from Saccharomyces cerevisiae (strain ATCC 204508 / S288c) (Baker's yeast).